The following is a 466-amino-acid chain: Transcription factor SOX-10 (466 aa).

Disordered regions lie at residues methionine 1–lysine 67, leucine 160–alanine 200, aspartate 213–asparagine 275, threonine 344–threonine 375, and arginine 433–proline 466. Positions leucine 23–glycine 32 are enriched in low complexity. Phosphoserine is present on serine 24. The dimerization (DIM) stretch occupies residues glutamate 62–proline 102. A DNA-binding region (HMG box) is located at residues valine 104 to lysine 172. The span at leucine 160 to tyrosine 173 shows a compositional bias: basic and acidic residues. A compositionally biased stretch (low complexity) spans alanine 183–alanine 200. Residues proline 228–valine 310 form a transactivation domain (TAM) region. Over residues alanine 254–isoleucine 271 the composition is skewed to basic and acidic residues. The transactivation domain (TAC) stretch occupies residues lysine 353–proline 466. Residues serine 440–proline 466 are compositionally biased toward polar residues.

In terms of assembly, monomer. Interacts with Armcx3 at the mitochondrial outer membrane surface. Interacts with PAX3. In terms of tissue distribution, expressed in oligodendroglia of the spinal tube (at protein level).

The protein resides in the cytoplasm. It localises to the nucleus. Its subcellular location is the mitochondrion outer membrane. Its function is as follows. Transcription factor that plays a central role in developing and mature glia. Specifically activates expression of myelin genes, during oligodendrocyte (OL) maturation, such as DUSP15 and MYRF, thereby playing a central role in oligodendrocyte maturation and CNS myelination. Once induced, MYRF cooperates with SOX10 to implement the myelination program. Transcriptional activator of MITF, acting synergistically with PAX3. Transcriptional activator of MBP, via binding to the gene promoter. The chain is Transcription factor SOX-10 (Sox10) from Mus musculus (Mouse).